Here is a 1124-residue protein sequence, read N- to C-terminus: Anillin (1124 aa).

Residue Met-1 is modified to N-acetylmethionine. Basic and acidic residues predominate over residues 1 to 25; the sequence is MDPFTEKLLERTRARRENLQRKMAE. A required for ubiquitination region spans residues 1–45; it reads MDPFTEKLLERTRARRENLQRKMAERPTAAPRSMTHAKRARQPLS. 2 disordered regions span residues 1 to 113 and 136 to 196; these read MDPF…ADTI and ATAA…ATPV. The interval 1–155 is interaction with CD2AP; that stretch reads MDPFTEKLLE…MQKLAEQRRR (155 aa). The nuclear localization stretch occupies residues 1–230; that stretch reads MDPFTEKLLE…AKQNSVQEQP (230 aa). Phosphoserine occurs at positions 54 and 72. Polar residues predominate over residues 77–96; sequence VEVSNLENKQPVESTSAKSC. Phosphoserine is present on residues Ser-97 and Ser-102. Positions 97–108 are enriched in low complexity; sequence SPSPVSPQVQPQ. Residues 148 to 158 are compositionally biased toward basic and acidic residues; sequence KLAEQRRRWDN. Ser-172 and Ser-182 each carry phosphoserine. The residue at position 194 (Thr-194) is a Phosphothreonine. Ser-225 and Ser-252 each carry phosphoserine. The interval 231–676 is interaction with F-actin; it reads GTACLSKFSS…RDLLYSIDAY (446 aa). A Glycyl lysine isopeptide (Lys-Gly) (interchain with G-Cter in SUMO1) cross-link involves residue Lys-254. At Ser-261 the chain carries Phosphoserine. Residues 294 to 305 show a composition bias toward polar residues; that stretch reads TSPVKSTTSITD. Residues 294–328 form a disordered region; sequence TSPVKSTTSITDAKSCEGQNPELLPKTPISPLKTG. Position 320 is a phosphothreonine (Thr-320). Phosphoserine is present on residues Ser-323 and Ser-339. Thr-364 carries the post-translational modification Phosphothreonine. An N6-acetyllysine modification is found at Lys-371. A compositionally biased stretch (basic and acidic residues) spans 380–389; sequence RCQEHSKESP. A disordered region spans residues 380 to 399; sequence RCQEHSKESPARSTPHRTPI. Phosphothreonine occurs at positions 397 and 401. 7 positions are modified to phosphoserine: Ser-417, Ser-419, Ser-449, Ser-485, Ser-518, Ser-553, and Ser-561. The stretch at 569 to 604 forms a coiled coil; that stretch reads FSDVLEEGELDMEKSQEEMDQALAESSEEQEDALNI. Disordered stretches follow at residues 579-600 and 625-664; these read DMEK…EQED and LVST…SLGS. Basic and acidic residues-rich tracts occupy residues 631 to 644 and 654 to 664; these read LELK…ESPK and PRAESGDSLGS. 5 positions are modified to phosphoserine: Ser-637, Ser-642, Ser-658, Ser-661, and Ser-664. Residue Tyr-671 is modified to Phosphotyrosine. A phosphoserine mark is found at Ser-678, Ser-688, Ser-792, and Ser-927. The localization to the cleavage furrow stretch occupies residues 730–1124; that stretch reads QQTVIYQASQ…DACYKPIGKP (395 aa). The PH domain maps to 983–1107; it reads SVEERGFLTI…WMQKLNQVLV (125 aa).

As to quaternary structure, interacts with F-actin. Interacts with CD2AP. May interact with RHOA. Interacts with FZR1/CDH1 during mitotic exit. In terms of processing, phosphorylated during mitosis. Ubiquitinated, and this requires FZR1/CDH1. As to expression, ubiquitously expressed. Present at highest levels in the brain, at high levels in the placenta and testis, at intermediate levels in the intestine, ovary, skeletal muscle and thymus and at lower levels in heart, kidney, liver, lung, pancreas, prostate and spleen. In the kidney, it is widely expressed in tubules, but sparsely expressed in the glomerulus. Expression is significantly increased in renal biopsy specimens from idiopathic FSGS. Overexpressed in many tumor types including breast, colorectal, endometrial, hepatic, kidney, lung, ovarian and pancreatic tumors.

Its subcellular location is the nucleus. It is found in the cytoplasm. The protein localises to the cytoskeleton. The protein resides in the cell cortex. It localises to the cell projection. Its subcellular location is the bleb. In terms of biological role, required for cytokinesis. Essential for the structural integrity of the cleavage furrow and for completion of cleavage furrow ingression. Plays a role in bleb assembly during metaphase and anaphase of mitosis. May play a significant role in podocyte cell migration. In Homo sapiens (Human), this protein is Anillin (ANLN).